The following is a 414-amino-acid chain: Carboxynorspermidine synthase (414 aa).

It belongs to the saccharopine dehydrogenase family. Carboxynorspermidine synthase subfamily. Homodimer.

The enzyme catalyses carboxynorspermidine + NADP(+) + H2O = L-aspartate 4-semialdehyde + propane-1,3-diamine + NADPH + H(+). It catalyses the reaction carboxyspermidine + NADP(+) + H2O = L-aspartate 4-semialdehyde + putrescine + NADPH + H(+). With respect to regulation, activated by dithiothreitol and inhibited by SH-reactive compounds. Involved in norspermidine biosynthesis. Catalyzes the synthesis of carboxynorspermidine from L-aspartate 4-semialdehyde and 1,3-diaminopropane. Is also slightly active with putrescine as a substrate. The chain is Carboxynorspermidine synthase from Vibrio alginolyticus (strain ATCC 17749 / DSM 2171 / NBRC 15630 / NCIMB 1903 / NCTC 12160 / XII-53).